Reading from the N-terminus, the 457-residue chain is Pup--protein ligase (457 aa).

A Mg(2+)-binding site is contributed by glutamate 9. Residue arginine 53 participates in ATP binding. Tyrosine 55 lines the Mg(2+) pocket. Catalysis depends on aspartate 57, which acts as the Proton acceptor. Position 63 (glutamate 63) interacts with Mg(2+). 2 residues coordinate ATP: threonine 66 and tryptophan 424.

Belongs to the Pup ligase/Pup deamidase family. Pup-conjugating enzyme subfamily.

The enzyme catalyses ATP + [prokaryotic ubiquitin-like protein]-L-glutamate + [protein]-L-lysine = ADP + phosphate + N(6)-([prokaryotic ubiquitin-like protein]-gamma-L-glutamyl)-[protein]-L-lysine.. It functions in the pathway protein degradation; proteasomal Pup-dependent pathway. The protein operates within protein modification; protein pupylation. Functionally, catalyzes the covalent attachment of the prokaryotic ubiquitin-like protein modifier Pup to the proteasomal substrate proteins, thereby targeting them for proteasomal degradation. This tagging system is termed pupylation. The ligation reaction involves the side-chain carboxylate of the C-terminal glutamate of Pup and the side-chain amino group of a substrate lysine. The polypeptide is Pup--protein ligase (Xylanimonas cellulosilytica (strain DSM 15894 / JCM 12276 / CECT 5975 / KCTC 9989 / LMG 20990 / NBRC 107835 / XIL07)).